We begin with the raw amino-acid sequence, 438 residues long: MVKNVTVIGGGLAGSEAAWQLAKRGIEVDLYEMRPKKNTPAHETANFAELVCTNSMRSNQLSNAVGLLKEEMRQLDSLIMKAADETAVPAGGALAVDRDKFSAVVTKTLKDLPNVHVHEEEITEIPKDGITIIATGPLTSDTLAEQIKEFCGTDSLHFFDAAAPIVAASSINRDIVYKKSRYDKGEAAYLNCPMTKEEFYNFYKNLVGAETATLHGFEDKNVFEGCMPIEVMAKRGEKTMLFGPLKPVGLEDPKTGKTPYAVVQLRQDNAASTMYNIVGFQTHLKYGEQKRVFSMIPGLENAKFVRYGKMHRNTYIASPEVLNANYEARKQTGLFFAGQMTGVEGYVESAGSGLVAGINAAREALGEETLFFPKSTALGSMANYITTTSAKHFQPMNASYALLPKLDYKVRNKQERHLEISKRALKDLEAFKEEKKLD.

9–14 (GGGLAG) lines the FAD pocket.

This sequence belongs to the MnmG family. TrmFO subfamily. Requires FAD as cofactor.

The protein resides in the cytoplasm. It carries out the reaction uridine(54) in tRNA + (6R)-5,10-methylene-5,6,7,8-tetrahydrofolate + NADH + H(+) = 5-methyluridine(54) in tRNA + (6S)-5,6,7,8-tetrahydrofolate + NAD(+). The catalysed reaction is uridine(54) in tRNA + (6R)-5,10-methylene-5,6,7,8-tetrahydrofolate + NADPH + H(+) = 5-methyluridine(54) in tRNA + (6S)-5,6,7,8-tetrahydrofolate + NADP(+). Functionally, catalyzes the folate-dependent formation of 5-methyl-uridine at position 54 (M-5-U54) in all tRNAs. This is Methylenetetrahydrofolate--tRNA-(uracil-5-)-methyltransferase TrmFO from Lactobacillus johnsonii (strain CNCM I-12250 / La1 / NCC 533).